A 554-amino-acid chain; its full sequence is Membrane protein insertase YidC (554 aa).

A run of 5 helical transmembrane segments spans residues 7-24 (VLWVIFFMSAVMLYDNWQ), 362-382 (VVGNWGWAIVLLTILIKAVFF), 436-456 (LPVVIQIPVFISLYWVLLASV), 475-495 (PFFILPVLMAVSMYVQTSLNP), and 510-530 (PIAFSVMFFFFPAGLVLYYVV).

Belongs to the OXA1/ALB3/YidC family. Type 1 subfamily. As to quaternary structure, interacts with the Sec translocase complex via SecD. Specifically interacts with transmembrane segments of nascent integral membrane proteins during membrane integration.

The protein resides in the cell inner membrane. Required for the insertion and/or proper folding and/or complex formation of integral membrane proteins into the membrane. Involved in integration of membrane proteins that insert both dependently and independently of the Sec translocase complex, as well as at least some lipoproteins. Aids folding of multispanning membrane proteins. In Burkholderia vietnamiensis (strain G4 / LMG 22486) (Burkholderia cepacia (strain R1808)), this protein is Membrane protein insertase YidC.